A 235-amino-acid polypeptide reads, in one-letter code: 2,3,4,5-tetrahydropyridine-2,6-dicarboxylate N-acetyltransferase (235 aa).

Belongs to the transferase hexapeptide repeat family. DapH subfamily.

It catalyses the reaction (S)-2,3,4,5-tetrahydrodipicolinate + acetyl-CoA + H2O = L-2-acetamido-6-oxoheptanedioate + CoA. It functions in the pathway amino-acid biosynthesis; L-lysine biosynthesis via DAP pathway; LL-2,6-diaminopimelate from (S)-tetrahydrodipicolinate (acetylase route): step 1/3. Its function is as follows. Catalyzes the transfer of an acetyl group from acetyl-CoA to tetrahydrodipicolinate. The protein is 2,3,4,5-tetrahydropyridine-2,6-dicarboxylate N-acetyltransferase of Exiguobacterium sibiricum (strain DSM 17290 / CCUG 55495 / CIP 109462 / JCM 13490 / 255-15).